The sequence spans 700 residues: Methionine--tRNA ligase (700 aa).

A 'HIGH' region motif is present at residues 16–26 (PYANGAFHVGH). Positions 148, 151, 161, and 164 each coordinate Zn(2+). The 'KMSKS' region motif lies at 337-341 (KMSKS). Lysine 340 contacts ATP. A tRNA-binding domain is found at 594–700 (DFAKIDLRIA…PGAEPGMRVG (107 aa)).

Belongs to the class-I aminoacyl-tRNA synthetase family. MetG type 1 subfamily. As to quaternary structure, homodimer. It depends on Zn(2+) as a cofactor.

The protein resides in the cytoplasm. The enzyme catalyses tRNA(Met) + L-methionine + ATP = L-methionyl-tRNA(Met) + AMP + diphosphate. Its function is as follows. Is required not only for elongation of protein synthesis but also for the initiation of all mRNA translation through initiator tRNA(fMet) aminoacylation. In Janthinobacterium sp. (strain Marseille) (Minibacterium massiliensis), this protein is Methionine--tRNA ligase.